Consider the following 147-residue polypeptide: Hemoglobin subunit epsilon (147 aa).

The region spanning 3–147 (HFTAEEKTAI…VASALAHKYH (145 aa)) is the Globin domain. 2 positions are modified to phosphoserine: Ser14 and Ser51. The heme b site is built by His64 and His93.

This sequence belongs to the globin family. In terms of tissue distribution, red blood cells.

Functionally, hemoglobin epsilon chain is an embryonic-type beta-type chain found in prenatal and neonatal marsupials. This is Hemoglobin subunit epsilon (HBE1) from Notamacropus eugenii (Tammar wallaby).